The following is a 152-amino-acid chain: MADVEPEVAAAGVPKKRTFKKFAFKGVDLDALLDMSTDDLVKLFSSRIRRRFSRGLTRKPMALIKKLRKAKREAPAGEKPEPVRTHLRNMIIVPEMIGSIIGVYNGKTFNQVEIKPEMIGHYLAEFSISYKPVKHGRPGVGATHSSRFIPLK.

The protein belongs to the universal ribosomal protein uS19 family.

Its subcellular location is the cytoplasm. The polypeptide is Small ribosomal subunit protein uS19x (RPS15D) (Arabidopsis thaliana (Mouse-ear cress)).